Here is a 301-residue protein sequence, read N- to C-terminus: E3 ubiquitin-protein ligase DIS1 (301 aa).

An RING-type; degenerate zinc finger spans residues 53–89 (CPVCLSAMYPPIHQCSNGHTLCSGCKPRVHNRCPTCR). The segment at 106–166 (SLELPCKYQN…LVNHLKDDHK (61 aa)) adopts an SIAH-type; degenerate zinc-finger fold.

This sequence belongs to the SINA (Seven in absentia) family. In terms of assembly, homodimer. Interacts with NEK6. Interacts with SKIPA.

Its subcellular location is the nucleus. The protein resides in the cytoplasm. It catalyses the reaction S-ubiquitinyl-[E2 ubiquitin-conjugating enzyme]-L-cysteine + [acceptor protein]-L-lysine = [E2 ubiquitin-conjugating enzyme]-L-cysteine + N(6)-ubiquitinyl-[acceptor protein]-L-lysine.. It participates in protein modification; protein ubiquitination. Functionally, E3 ubiquitin-protein ligase that mediates ubiquitination and subsequent proteasomal degradation of target proteins. E3 ubiquitin ligases accept ubiquitin from an E2 ubiquitin-conjugating enzyme in the form of a thioester and then directly transfers the ubiquitin to targeted substrates. Plays a negative role in drought stress tolerance through transcriptional and post-translational regulation of diverse stress-related genes. Interacts with the serine/threonine-protein kinase NEK6 and promotes its degradation via the 26S proteasome-dependent pathway. The sequence is that of E3 ubiquitin-protein ligase DIS1 from Oryza sativa subsp. japonica (Rice).